The following is a 250-amino-acid chain: Tetrathionate reductase subunit B (250 aa).

Residues M1–A33 constitute a signal peptide (tat-type signal). 4Fe-4S ferredoxin-type domains follow at residues Y50 to A79, V97 to D128, and G129 to E158. [4Fe-4S] cluster contacts are provided by C59, C62, C65, C69, C106, C109, C114, C118, C138, C141, C144, C148, C165, C168, C180, and C184.

As to quaternary structure, probably composed of three subunits: TtrA, TtrB and TtrC. In terms of processing, predicted to be exported by the Tat system. The position of the signal peptide cleavage has not been experimentally proven.

It is found in the periplasm. Its subcellular location is the cell inner membrane. In terms of biological role, part of a membrane-bound tetrathionate reductase that catalyzes the reduction of tetrathionate to thiosulfate. TtrB is probably involved in transfer of electrons from TtrC to TtrA. During mice infection, the ability to use tetrathionate as an electron acceptor is a growth advantage for S.typhimurium over the competing microbiota in the lumen of the inflamed gut. This Salmonella typhimurium (strain LT2 / SGSC1412 / ATCC 700720) protein is Tetrathionate reductase subunit B (ttrB).